Reading from the N-terminus, the 603-residue chain is UvrABC system protein C (603 aa).

The region spanning 15 to 92 is the GIY-YIG domain; sequence DQPGCYLMKD…IKKHDPRFNI (78 aa). The UVR domain occupies 197-232; it reads KTVKNDLMKKMQVAAENMEFEKAGEFRDQINAIETT.

The protein belongs to the UvrC family. In terms of assembly, interacts with UvrB in an incision complex.

The protein resides in the cytoplasm. In terms of biological role, the UvrABC repair system catalyzes the recognition and processing of DNA lesions. UvrC both incises the 5' and 3' sides of the lesion. The N-terminal half is responsible for the 3' incision and the C-terminal half is responsible for the 5' incision. In Listeria welshimeri serovar 6b (strain ATCC 35897 / DSM 20650 / CCUG 15529 / CIP 8149 / NCTC 11857 / SLCC 5334 / V8), this protein is UvrABC system protein C.